A 214-amino-acid polypeptide reads, in one-letter code: Probable GTP-binding protein EngB (214 aa).

Residues 25-203 form the EngB-type G domain; sequence EGAEVAFAGR…EQVITGWLNL (179 aa). Residues 33 to 40, 60 to 64, 80 to 83, 147 to 150, and 182 to 184 contribute to the GTP site; these read GRSNAGKS, GRTQL, DLPG, TKSD, and FSS. Mg(2+) contacts are provided by Ser40 and Thr62.

This sequence belongs to the TRAFAC class TrmE-Era-EngA-EngB-Septin-like GTPase superfamily. EngB GTPase family. Mg(2+) is required as a cofactor.

In terms of biological role, necessary for normal cell division and for the maintenance of normal septation. The chain is Probable GTP-binding protein EngB from Teredinibacter turnerae (strain ATCC 39867 / T7901).